The chain runs to 247 residues: Adenosine 5'-phosphosulfate reductase (247 aa).

[4Fe-4S] cluster contacts are provided by Cys133, Cys134, Cys216, and Cys219. Residues 222 to 247 (KPAPGSDPRSGRWAGQAKTECGLHAS) are disordered. Catalysis depends on Cys242, which acts as the Nucleophile; cysteine thiosulfonate intermediate.

Belongs to the PAPS reductase family. CysH subfamily. Requires [4Fe-4S] cluster as cofactor.

Its subcellular location is the cytoplasm. The enzyme catalyses [thioredoxin]-disulfide + sulfite + AMP + 2 H(+) = adenosine 5'-phosphosulfate + [thioredoxin]-dithiol. The protein operates within sulfur metabolism; hydrogen sulfide biosynthesis; sulfite from sulfate. In terms of biological role, catalyzes the formation of sulfite from adenosine 5'-phosphosulfate (APS) using thioredoxin as an electron donor. The sequence is that of Adenosine 5'-phosphosulfate reductase from Rhodococcus opacus (strain B4).